The following is a 429-amino-acid chain: 3-isopropylmalate dehydratase large subunit (429 aa).

3 residues coordinate [4Fe-4S] cluster: C303, C363, and C366.

The protein belongs to the aconitase/IPM isomerase family. LeuC type 2 subfamily. As to quaternary structure, heterodimer of LeuC and LeuD. The cofactor is [4Fe-4S] cluster.

The enzyme catalyses (2R,3S)-3-isopropylmalate = (2S)-2-isopropylmalate. The protein operates within amino-acid biosynthesis; L-leucine biosynthesis; L-leucine from 3-methyl-2-oxobutanoate: step 2/4. Functionally, catalyzes the isomerization between 2-isopropylmalate and 3-isopropylmalate, via the formation of 2-isopropylmaleate. The protein is 3-isopropylmalate dehydratase large subunit of Caldicellulosiruptor saccharolyticus (strain ATCC 43494 / DSM 8903 / Tp8T 6331).